The chain runs to 114 residues: Turripeptide OL22 (114 aa).

In terms of processing, contains 6 disulfide bonds. As to expression, expressed by the venom duct.

It is found in the secreted. In terms of biological role, acts as a neurotoxin by inhibiting an ion channel. The polypeptide is Turripeptide OL22 (Iotyrris olangoensis (Sea snail)).